A 107-amino-acid polypeptide reads, in one-letter code: uncharacterized protein (107 aa).

This is an uncharacterized protein from Saccharomyces cerevisiae (strain ATCC 204508 / S288c) (Baker's yeast).